Consider the following 287-residue polypeptide: Nematocyst expressed protein 6 (287 aa).

The signal sequence occupies residues 1–20 (MKGFIFAGVLVSALICLAEG). The 197-residue stretch at 53 to 249 (RAALRDRYLW…RQTNLMYKCN (197 aa)) folds into the Peptidase M12A domain. Intrachain disulfides connect Cys-95–Cys-248 and Cys-116–Cys-139. A Zn(2+)-binding site is contributed by His-146. Glu-147 is an active-site residue. His-150 and His-156 together coordinate Zn(2+). Positions 249–287 (NAQGDSELQPVNDEDEDKDGGDSKKKPDPKGPKPGEIEE) are disordered. The segment covering 268–287 (GGDSKKKPDPKGPKPGEIEE) has biased composition (basic and acidic residues).

It depends on Zn(2+) as a cofactor. In terms of tissue distribution, nematocyte and pharyngeal gland.

It localises to the secreted. It is found in the nematocyst. Functionally, metalloprotease. This chain is Nematocyst expressed protein 6, found in Nematostella vectensis (Starlet sea anemone).